A 493-amino-acid polypeptide reads, in one-letter code: MFS-type transporter efuF (493 aa).

11 consecutive transmembrane segments (helical) span residues 90–110, 117–137, 147–167, 179–199, 211–231, 279–299, 316–336, 343–363, 370–390, 406–426, and 435–455; these read ITLV…NMLL, IMLP…CAVH, LLMG…LTTF, IFYG…YGVF, FLMI…YWHL, IALY…VGNF, LYTV…CTSS, STHL…LITL, GPTY…SCIF, AVTG…SLAF, and IPAL…VLGF.

The protein belongs to the major facilitator superfamily.

It localises to the membrane. MFS-type transporter; part of the gene cluster that mediates the biosynthesis of enfumafungin, a glycosylated fernene-type triterpenoid with potent antifungal activity, mediated by its interaction with beta-1,3-glucan synthase and the fungal cell wall. Might facilitate the transport of glucose units to the subcellular site of enfumafungin biosynthesis. The chain is MFS-type transporter efuF from Hormonema carpetanum.